Consider the following 440-residue polypeptide: Cell division protein DivIB (440 aa).

Basic and acidic residues predominate over residues 1 to 10; the sequence is MMDDKTKNDQ. Disordered regions lie at residues 1-97 and 123-154; these read MMDD…DSNI and QHQSAPNEQNSDSNDEETVTKKERKSKVTQLK. The Cytoplasmic portion of the chain corresponds to 1–174; sequence MMDDKTKNDQ…RRKRQKRIQY (174 aa). Residues 12 to 21 show a composition bias toward acidic residues; the sequence is ESNEDKDELE. Over residues 27–39 the composition is skewed to basic residues; it reads TSKKRRQRKRSKA. A compositionally biased stretch (low complexity) spans 78–87; the sequence is DSASSHANDN. Residues 88-97 show a composition bias toward acidic residues; sequence NIDDSTDSNI. Residues 124–134 are compositionally biased toward polar residues; sequence HQSAPNEQNSD. A helical membrane pass occupies residues 175–195; it reads SVITILVLLIAVILIYMFSPL. Residues 196–264 enclose the POTRA domain; that stretch reads SKIAHVNING…NTLNVDITEN (69 aa). Residues 196 to 440 lie on the Extracellular side of the membrane; that stretch reads SKIAHVNING…KINKQSSKNN (245 aa). The interval 397 to 440 is disordered; sequence YRGNTSTQSESDKNVTKSSQEENQAKEELQSVLNKINKQSSKNN. The span at 406 to 425 shows a compositional bias: basic and acidic residues; it reads ESDKNVTKSSQEENQAKEEL. A compositionally biased stretch (polar residues) spans 427 to 440; sequence SVLNKINKQSSKNN.

The protein belongs to the FtsQ/DivIB family. DivIB subfamily.

The protein resides in the cell membrane. Its function is as follows. Cell division protein that may be involved in stabilizing or promoting the assembly of the division complex. The protein is Cell division protein DivIB of Staphylococcus aureus (strain MRSA252).